A 341-amino-acid polypeptide reads, in one-letter code: Anthranilate phosphoribosyltransferase (341 aa).

5-phospho-alpha-D-ribose 1-diphosphate contacts are provided by residues glycine 79, 82 to 83 (GD), threonine 87, 89 to 92 (NIST), 107 to 115 (KHGNRAVSS), and serine 119. Residue glycine 79 participates in anthranilate binding. Serine 91 lines the Mg(2+) pocket. Asparagine 110 provides a ligand contact to anthranilate. Residue arginine 165 coordinates anthranilate. Mg(2+) contacts are provided by aspartate 224 and glutamate 225.

Belongs to the anthranilate phosphoribosyltransferase family. Homodimer. Mg(2+) is required as a cofactor.

It carries out the reaction N-(5-phospho-beta-D-ribosyl)anthranilate + diphosphate = 5-phospho-alpha-D-ribose 1-diphosphate + anthranilate. It participates in amino-acid biosynthesis; L-tryptophan biosynthesis; L-tryptophan from chorismate: step 2/5. Catalyzes the transfer of the phosphoribosyl group of 5-phosphorylribose-1-pyrophosphate (PRPP) to anthranilate to yield N-(5'-phosphoribosyl)-anthranilate (PRA). This chain is Anthranilate phosphoribosyltransferase, found in Bacillus thuringiensis subsp. konkukian (strain 97-27).